Here is a 257-residue protein sequence, read N- to C-terminus: Galactitol 2-dehydrogenase (257 aa).

Residues 21 to 23 (RAI), 67 to 68 (DV), asparagine 94, tyrosine 162, and lysine 166 each bind NAD(+). Catalysis depends on tyrosine 162, which acts as the Proton acceptor.

The protein belongs to the short-chain dehydrogenases/reductases (SDR) family. Homotetramer. Mg(2+) serves as cofactor.

It carries out the reaction galactitol + NAD(+) = keto-D-tagatose + NADH + H(+). Its function is as follows. Catalyzes the oxidation of galactitol to D-tagatose. Also catalyzes the oxidation of a wide range of substrates, including polyvalent aliphatic alcohols and polyols, to the corresponding ketones and ketoses. Galactitol is the preferred substrate. This Rhizobium johnstonii (strain DSM 114642 / LMG 32736 / 3841) (Rhizobium leguminosarum bv. viciae) protein is Galactitol 2-dehydrogenase.